Reading from the N-terminus, the 397-residue chain is Acetate kinase 1 (397 aa).

Asn8 lines the Mg(2+) pocket. ATP is bound at residue Lys15. Arg89 contacts substrate. The active-site Proton donor/acceptor is the Asp146. Residues His206–Gly210, Asp281–Arg283, and Gly329–Asn333 contribute to the ATP site. Residue Glu380 coordinates Mg(2+).

This sequence belongs to the acetokinase family. In terms of assembly, homodimer. Mg(2+) serves as cofactor. Requires Mn(2+) as cofactor.

It is found in the cytoplasm. The catalysed reaction is acetate + ATP = acetyl phosphate + ADP. It participates in metabolic intermediate biosynthesis; acetyl-CoA biosynthesis; acetyl-CoA from acetate: step 1/2. In terms of biological role, catalyzes the formation of acetyl phosphate from acetate and ATP. Can also catalyze the reverse reaction. This chain is Acetate kinase 1, found in Listeria monocytogenes serotype 4b (strain F2365).